A 106-amino-acid chain; its full sequence is Small ribosomal subunit protein uS10 (106 aa).

The protein belongs to the universal ribosomal protein uS10 family. As to quaternary structure, part of the 30S ribosomal subunit.

Involved in the binding of tRNA to the ribosomes. This Prochlorococcus marinus (strain MIT 9312) protein is Small ribosomal subunit protein uS10.